Consider the following 463-residue polypeptide: Glutamate--tRNA ligase (463 aa).

A 'HIGH' region motif is present at residues 10-20 (PSPTGYLHIGG). Positions 252–256 (KLSKR) match the 'KMSKS' region motif. K255 serves as a coordination point for ATP.

Belongs to the class-I aminoacyl-tRNA synthetase family. Glutamate--tRNA ligase type 1 subfamily. As to quaternary structure, monomer.

The protein resides in the cytoplasm. The catalysed reaction is tRNA(Glu) + L-glutamate + ATP = L-glutamyl-tRNA(Glu) + AMP + diphosphate. Its function is as follows. Catalyzes the attachment of glutamate to tRNA(Glu) in a two-step reaction: glutamate is first activated by ATP to form Glu-AMP and then transferred to the acceptor end of tRNA(Glu). The sequence is that of Glutamate--tRNA ligase from Mycoplasmopsis agalactiae (strain NCTC 10123 / CIP 59.7 / PG2) (Mycoplasma agalactiae).